A 72-amino-acid polypeptide reads, in one-letter code: Translation initiation factor IF-1 (72 aa).

The S1-like domain maps to 1–72; sequence MAKEGNIEME…SKGRIVYRAR (72 aa).

Belongs to the IF-1 family. As to quaternary structure, component of the 30S ribosomal translation pre-initiation complex which assembles on the 30S ribosome in the order IF-2 and IF-3, IF-1 and N-formylmethionyl-tRNA(fMet); mRNA recruitment can occur at any time during PIC assembly.

The protein resides in the cytoplasm. One of the essential components for the initiation of protein synthesis. Stabilizes the binding of IF-2 and IF-3 on the 30S subunit to which N-formylmethionyl-tRNA(fMet) subsequently binds. Helps modulate mRNA selection, yielding the 30S pre-initiation complex (PIC). Upon addition of the 50S ribosomal subunit IF-1, IF-2 and IF-3 are released leaving the mature 70S translation initiation complex. This is Translation initiation factor IF-1 from Hahella chejuensis (strain KCTC 2396).